The chain runs to 199 residues: Potassium-transporting ATPase KdpC subunit (199 aa).

The helical transmembrane segment at 7–27 (PALVMTAALCLITGIIYPGLI) threads the bilayer.

This sequence belongs to the KdpC family. The system is composed of three essential subunits: KdpA, KdpB and KdpC.

Its subcellular location is the cell inner membrane. Functionally, part of the high-affinity ATP-driven potassium transport (or Kdp) system, which catalyzes the hydrolysis of ATP coupled with the electrogenic transport of potassium into the cytoplasm. This subunit acts as a catalytic chaperone that increases the ATP-binding affinity of the ATP-hydrolyzing subunit KdpB by the formation of a transient KdpB/KdpC/ATP ternary complex. The chain is Potassium-transporting ATPase KdpC subunit from Gemmatimonas aurantiaca (strain DSM 14586 / JCM 11422 / NBRC 100505 / T-27).